The sequence spans 220 residues: B-cell antigen receptor complex-associated protein alpha chain (220 aa).

The signal sequence occupies residues 1–28 (MPGGLEALRALPLLLFLSYACLGPGCQA). Positions 29–117 (LRVEGGPPSL…ILKRSCGTYL (89 aa)) constitute an Ig-like C2-type domain. Topologically, residues 29–137 (LRVEGGPPSL…LDMGEGTKNR (109 aa)) are extracellular. An intrachain disulfide couples Cys50 to Cys101. Residues Asn58 and Asn68 are each glycosylated (N-linked (GlcNAc...) asparagine). Residues 138 to 159 (IITAEGIILLFCAVVPGTLLLF) traverse the membrane as a helical segment. Over 160-220 (RKRWQNEKFG…HIGDAQLEKP (61 aa)) the chain is Cytoplasmic. The 29-residue stretch at 171–199 (DMPDDYEDENLYEGLNLDDCSMYEDISRG) folds into the ITAM domain. 2 positions are modified to phosphotyrosine; by SRC-type Tyr-kinases: Tyr182 and Tyr193. Arg198 carries the post-translational modification Asymmetric dimethylarginine; by PRMT1. Tyr204 is modified (phosphotyrosine; by Tyr-kinases).

Heterodimer of alpha and beta chains; disulfide-linked. Part of the B-cell antigen receptor complex where the alpha/beta chain heterodimer is non-covalently associated with an antigen-specific membrane-bound surface immunoglobulin of two heavy chains and two light chains. Interacts through its phosphorylated ITAM domain with the SH2 domains of SYK which stimulates SYK autophosphorylation and activation. Also interacts, when phosphorylated on Tyr-204, with the SH2 domain of BLNK/SLP65, bringing BLNK into proximity with SYK and allowing SYK to phosphorylate BLNK which is necessary for trafficking of the BCR to late endosomes. Interacts with Src-family tyrosine kinases including FYN and LYN, increasing their activity. Post-translationally, phosphorylated on tyrosine, serine and threonine residues upon B-cell activation. Phosphorylation of tyrosine residues by Src-family kinases, including LYN, is an early and essential feature of the BCR signaling cascade. The phosphorylated tyrosines serve as docking sites for SH2-domain containing kinases, leading to their activation which in turn leads to phosphorylation of downstream targets. Phosphorylation of serine and threonine residues may prevent subsequent tyrosine phosphorylation. In terms of processing, arginine methylation in the ITAM domain may interfere with the binding of SYK. It promotes signals leading to B-cell differentiation. As to expression, B-cells.

Its subcellular location is the cell membrane. In terms of biological role, required in cooperation with CD79B for initiation of the signal transduction cascade activated by binding of antigen to the B-cell antigen receptor complex (BCR) which leads to internalization of the complex, trafficking to late endosomes and antigen presentation. Also required for BCR surface expression and for efficient differentiation of pro- and pre-B-cells. Stimulates SYK autophosphorylation and activation. Binds to BLNK, bringing BLNK into proximity with SYK and allowing SYK to phosphorylate BLNK. Also interacts with and increases activity of some Src-family tyrosine kinases. Represses BCR signaling during development of immature B-cells. This Mus musculus (Mouse) protein is B-cell antigen receptor complex-associated protein alpha chain (Cd79a).